The following is a 246-amino-acid chain: 3-deoxy-manno-octulosonate cytidylyltransferase (246 aa).

This sequence belongs to the KdsB family.

It is found in the cytoplasm. The enzyme catalyses 3-deoxy-alpha-D-manno-oct-2-ulosonate + CTP = CMP-3-deoxy-beta-D-manno-octulosonate + diphosphate. It functions in the pathway nucleotide-sugar biosynthesis; CMP-3-deoxy-D-manno-octulosonate biosynthesis; CMP-3-deoxy-D-manno-octulosonate from 3-deoxy-D-manno-octulosonate and CTP: step 1/1. Its pathway is bacterial outer membrane biogenesis; lipopolysaccharide biosynthesis. Functionally, activates KDO (a required 8-carbon sugar) for incorporation into bacterial lipopolysaccharide in Gram-negative bacteria. The sequence is that of 3-deoxy-manno-octulosonate cytidylyltransferase from Bradyrhizobium diazoefficiens (strain JCM 10833 / BCRC 13528 / IAM 13628 / NBRC 14792 / USDA 110).